We begin with the raw amino-acid sequence, 557 residues long: Formate--tetrahydrofolate ligase (557 aa).

An ATP-binding site is contributed by 67-74; that stretch reads TPAGEGKT.

The protein belongs to the formate--tetrahydrofolate ligase family.

It carries out the reaction (6S)-5,6,7,8-tetrahydrofolate + formate + ATP = (6R)-10-formyltetrahydrofolate + ADP + phosphate. It functions in the pathway one-carbon metabolism; tetrahydrofolate interconversion. This Cereibacter sphaeroides (strain ATCC 17025 / ATH 2.4.3) (Rhodobacter sphaeroides) protein is Formate--tetrahydrofolate ligase.